Consider the following 66-residue polypeptide: DNA-binding protein 7d (66 aa).

K5 and K7 each carry N6-methyllysine; partial.

It belongs to the 7 kDa DNA-binding/endoribonuclease P2 family. Monomer. Lys-5 was 70% monomethylated in form 7a, 25% in form 7b, and 20% in form 7d. Lys-7 was 50% monomethylated in form 7a, 40% in form 7b, and 50% in form 7d.

It localises to the cytoplasm. Its function is as follows. Can constrain negative DNA supercoils. May be involved in maintaining the integrity of the genome at high temperature. This is DNA-binding protein 7d from Sulfolobus acidocaldarius (strain ATCC 33909 / DSM 639 / JCM 8929 / NBRC 15157 / NCIMB 11770).